A 157-amino-acid polypeptide reads, in one-letter code: Frd operon probable iron-sulfur subunit A (157 aa).

3 consecutive 4Fe-4S ferredoxin-type domains span residues Lys-24–Lys-55, Asp-56–Arg-85, and Phe-100–Arg-133. The [4Fe-4S] cluster site is built by Cys-34, Cys-37, Cys-42, Cys-46, Cys-65, Cys-68, Cys-71, Cys-75, Cys-107, Cys-110, Cys-119, and Cys-123.

The sequence is that of Frd operon probable iron-sulfur subunit A from Proteus vulgaris.